A 280-amino-acid chain; its full sequence is L-proline cis-4-hydroxylase (280 aa).

Positions 106, 108, and 154 each coordinate Fe cation. A 2-oxoglutarate-binding site is contributed by Arg-164.

The protein belongs to the L-proline cis-4-/cis-3-hydroxylase family. It depends on Fe(2+) as a cofactor.

The catalysed reaction is L-proline + 2-oxoglutarate + O2 = cis-4-hydroxy-L-proline + succinate + CO2. Its activity is regulated as follows. Inhibited by metal ions such as Co(2+), Zn(2+), Cu(2+) or Ni(2+). Is also inhibited by EDTA or diethylpyrocarbonate (DEPC) in vitro. Unlike the procollagen-proline cis-3- and trans-4-hydroxylases from mammals, does not necessarily require L-ascorbate for activity although it does increase the activity of the enzyme. Dioxygenase that catalyzes the 2-oxoglutarate-dependent selective hydroxylation of free L-proline to cis-4-hydroxy-L-proline (cis-4-Hyp). The protein is L-proline cis-4-hydroxylase of Mesorhizobium japonicum (strain LMG 29417 / CECT 9101 / MAFF 303099) (Mesorhizobium loti (strain MAFF 303099)).